Consider the following 262-residue polypeptide: Expansin-A21 (262 aa).

A signal peptide spans 1-29 (MKLLEKMTYVECFMIIMATWFMFISYSHG). The Expansin-like EG45 domain occupies 64–169 (EGACGYGDLN…RRVPCAKTGG (106 aa)). The Expansin-like CBD domain maps to 179 to 258 (NILTILPYNV…SWGFGQTFDG (80 aa)).

The protein belongs to the expansin family. Expansin A subfamily.

The protein resides in the secreted. It is found in the cell wall. Its subcellular location is the membrane. In terms of biological role, causes loosening and extension of plant cell walls by disrupting non-covalent bonding between cellulose microfibrils and matrix glucans. No enzymatic activity has been found. The polypeptide is Expansin-A21 (EXPA21) (Arabidopsis thaliana (Mouse-ear cress)).